A 238-amino-acid chain; its full sequence is Ribonuclease PH (238 aa).

Residues arginine 86 and 124–126 (GTR) contribute to the phosphate site.

The protein belongs to the RNase PH family. In terms of assembly, homohexameric ring arranged as a trimer of dimers.

The catalysed reaction is tRNA(n+1) + phosphate = tRNA(n) + a ribonucleoside 5'-diphosphate. Phosphorolytic 3'-5' exoribonuclease that plays an important role in tRNA 3'-end maturation. Removes nucleotide residues following the 3'-CCA terminus of tRNAs; can also add nucleotides to the ends of RNA molecules by using nucleoside diphosphates as substrates, but this may not be physiologically important. Probably plays a role in initiation of 16S rRNA degradation (leading to ribosome degradation) during starvation. The protein is Ribonuclease PH of Salmonella choleraesuis (strain SC-B67).